A 130-amino-acid polypeptide reads, in one-letter code: MAKDEKWGIANIYSSYNNTIITVTDITGAETISQWSGGKVVRADRQQASPFAAMAAATRIADDAKEKGFVGLHIRVRAPGGNGHRSPGPGAQATIRALARAGIKIGKIEDITPIPHDGTGRPGGKRGRRV.

The interval 109–130 (EDITPIPHDGTGRPGGKRGRRV) is disordered.

Belongs to the universal ribosomal protein uS11 family. Part of the 30S ribosomal subunit.

Located on the platform of the 30S subunit. The sequence is that of Small ribosomal subunit protein uS11 from Methanobrevibacter smithii (strain ATCC 35061 / DSM 861 / OCM 144 / PS).